Consider the following 868-residue polypeptide: Leucine--tRNA ligase (868 aa).

The 'HIGH' region motif lies at 42 to 52 (PYPSGKLHMGH). The short motif at 627 to 631 (KMSKS) is the 'KMSKS' region element. Lys630 serves as a coordination point for ATP.

It belongs to the class-I aminoacyl-tRNA synthetase family.

The protein localises to the cytoplasm. It carries out the reaction tRNA(Leu) + L-leucine + ATP = L-leucyl-tRNA(Leu) + AMP + diphosphate. The chain is Leucine--tRNA ligase from Pseudomonas savastanoi pv. phaseolicola (strain 1448A / Race 6) (Pseudomonas syringae pv. phaseolicola (strain 1448A / Race 6)).